An 856-amino-acid polypeptide reads, in one-letter code: Translation initiation factor IF-2 (856 aa).

2 disordered regions span residues 1 to 248 (MSDN…ARAR) and 254 to 273 (KRAR…QQKQ). Positions 22 to 38 (ETGQVKQSFSHGRSNTV) are enriched in polar residues. The span at 83 to 93 (APRPAPAPIPT) shows a compositional bias: pro residues. Positions 100-150 (LERREQQERLLREAEEARMAALEETRRREERAKAEATEEERRRAEENRRAE) are enriched in basic and acidic residues. Residues 156 to 196 (AAAAAAAAATAEAETAAAAPREEAPAAAGTAEEAPRTSSST) are compositionally biased toward low complexity. A compositionally biased stretch (pro residues) spans 197–209 (MPPPRRFTPVPSP). The segment covering 210-229 (KRPEPPRPQQRDRKGDDRRQ) has biased composition (basic and acidic residues). The tr-type G domain maps to 356 to 526 (PRPPVVTIMG…ELQAELLELK (171 aa)). Residues 365–372 (GHVDHGKT) form a G1 region. GTP is bound at residue 365–372 (GHVDHGKT). A G2 region spans residues 390-394 (GITQH). The G3 stretch occupies residues 412–415 (DTPG). GTP is bound by residues 412–416 (DTPGH) and 466–469 (NKMD). The segment at 466-469 (NKMD) is G4. Residues 502 to 504 (SAL) form a G5 region.

The protein belongs to the TRAFAC class translation factor GTPase superfamily. Classic translation factor GTPase family. IF-2 subfamily.

The protein localises to the cytoplasm. One of the essential components for the initiation of protein synthesis. Protects formylmethionyl-tRNA from spontaneous hydrolysis and promotes its binding to the 30S ribosomal subunits. Also involved in the hydrolysis of GTP during the formation of the 70S ribosomal complex. This Rhizorhabdus wittichii (strain DSM 6014 / CCUG 31198 / JCM 15750 / NBRC 105917 / EY 4224 / RW1) (Sphingomonas wittichii) protein is Translation initiation factor IF-2.